The chain runs to 359 residues: Chorismate synthase (359 aa).

NADP(+) contacts are provided by Arg48 and Arg54. FMN is bound by residues 129 to 131 (RSS), 241 to 242 (NA), Gly285, 300 to 304 (KPTSS), and Arg326.

Belongs to the chorismate synthase family. In terms of assembly, homotetramer. Requires FMNH2 as cofactor.

The enzyme catalyses 5-O-(1-carboxyvinyl)-3-phosphoshikimate = chorismate + phosphate. It functions in the pathway metabolic intermediate biosynthesis; chorismate biosynthesis; chorismate from D-erythrose 4-phosphate and phosphoenolpyruvate: step 7/7. Functionally, catalyzes the anti-1,4-elimination of the C-3 phosphate and the C-6 proR hydrogen from 5-enolpyruvylshikimate-3-phosphate (EPSP) to yield chorismate, which is the branch point compound that serves as the starting substrate for the three terminal pathways of aromatic amino acid biosynthesis. This reaction introduces a second double bond into the aromatic ring system. The chain is Chorismate synthase from Afipia carboxidovorans (strain ATCC 49405 / DSM 1227 / KCTC 32145 / OM5) (Oligotropha carboxidovorans).